Reading from the N-terminus, the 381-residue chain is Probable serine/threonine-protein kinase PBL22 (381 aa).

C3 carries S-palmitoyl cysteine lipidation. T64 is subject to Phosphothreonine. The Protein kinase domain maps to 75–351 (FREGNIIGKG…GDVVVAFEYI (277 aa)). ATP is bound by residues 81 to 89 (IGKGGFGSV) and K103. Y148 is modified (phosphotyrosine). D201 acts as the Proton acceptor in catalysis. S235 is subject to Phosphoserine. A phosphothreonine mark is found at T236 and T241. Residue Y249 is modified to Phosphotyrosine. The tract at residues 361–381 (RRTARKSTDSNRLRRETKQSY) is disordered.

Belongs to the protein kinase superfamily. Ser/Thr protein kinase family. In terms of processing, palmitoylation at Cys-3 and Cys-6 are required for plasma membrane location.

It localises to the cell membrane. It carries out the reaction L-seryl-[protein] + ATP = O-phospho-L-seryl-[protein] + ADP + H(+). It catalyses the reaction L-threonyl-[protein] + ATP = O-phospho-L-threonyl-[protein] + ADP + H(+). May be involved in plant defense signaling. The sequence is that of Probable serine/threonine-protein kinase PBL22 from Arabidopsis thaliana (Mouse-ear cress).